The primary structure comprises 635 residues: Voltage-gated potassium channel KCNC4 (635 aa).

Positions 1–24 (MISSVCVSSYRGRKSGNKPPSKTC) are disordered. The segment at 1-28 (MISSVCVSSYRGRKSGNKPPSKTCLKEE) is inactivation gate. Topologically, residues 1–226 (MISSVCVSSY…EDPYSSRAAR (226 aa)) are cytoplasmic. 4 positions are modified to phosphoserine: serine 8, serine 9, serine 15, and serine 21. Zn(2+) is bound by residues histidine 116, cysteine 122, cysteine 143, and cysteine 144. The interval 160–180 (IFESPDGGGSGAGPSDEAGDD) is disordered. The chain crosses the membrane as a helical span at residues 227–247 (VVAFASLFFILVSITTFCLET). Residues asparagine 256 and asparagine 265 are each glycosylated (N-linked (GlcNAc...) asparagine). Residues 278–298 (EPILTYIEGVCVLWFTLEFLV) traverse the membrane as a helical segment. The Cytoplasmic portion of the chain corresponds to 299–312 (RIVCCPDTLDFVKN). A helical transmembrane segment spans residues 313-333 (LLNIIDFVAILPFYLEVGLSG). A helical; Voltage-sensor membrane pass occupies residues 345 to 364 (FLRVVRFVRILRIFKLTRHF). The Cytoplasmic segment spans residues 365–380 (VGLRVLGHTLRASTNE). The helical transmembrane segment at 381–401 (FLLLIIFLALGVLIFATMIYY) threads the bilayer. The K(+) site is built by threonine 436, leucine 437, glycine 438, and tyrosine 439. Positions 436–441 (TLGYGD) match the Selectivity filter motif. Residues 452–472 (VGALCALAGVLTIAMPVPVIV) traverse the membrane as a helical segment. Topologically, residues 473-635 (NNFGMYYSLA…PTAGTLFLPH (163 aa)) are cytoplasmic. The disordered stretch occupies residues 490–580 (KKRKKHVPRP…RRALRRSTTR (91 aa)). Over residues 527 to 542 (AREEGMIERKRADSKQ) the composition is skewed to basic and acidic residues.

It belongs to the potassium channel family. C (Shaw) (TC 1.A.1.2) subfamily. Kv3.4/KCNC4 sub-subfamily. As to quaternary structure, homotetramer. Heterotetramer of potassium channel proteins. In terms of processing, phosphorylation of serine residues in the inactivation gate inhibits rapid channel closure.

Its subcellular location is the membrane. It catalyses the reaction K(+)(in) = K(+)(out). Its function is as follows. Voltage-gated potassium channel that opens in response to the voltage difference across the membrane, forming a potassium-selective channel through which potassium ions pass in accordance with their electrochemical gradient. The channel displays rapid activation and inactivation kinetics. The chain is Voltage-gated potassium channel KCNC4 from Homo sapiens (Human).